Consider the following 302-residue polypeptide: 4-diphosphocytidyl-2-C-methyl-D-erythritol kinase (302 aa).

Lys32 is a catalytic residue. ATP is bound at residue 115 to 125 (PMGGGVGGGSS). Residue Asp157 is part of the active site.

The protein belongs to the GHMP kinase family. IspE subfamily.

It carries out the reaction 4-CDP-2-C-methyl-D-erythritol + ATP = 4-CDP-2-C-methyl-D-erythritol 2-phosphate + ADP + H(+). It functions in the pathway isoprenoid biosynthesis; isopentenyl diphosphate biosynthesis via DXP pathway; isopentenyl diphosphate from 1-deoxy-D-xylulose 5-phosphate: step 3/6. Functionally, catalyzes the phosphorylation of the position 2 hydroxy group of 4-diphosphocytidyl-2C-methyl-D-erythritol. The protein is 4-diphosphocytidyl-2-C-methyl-D-erythritol kinase of Actinobacillus succinogenes (strain ATCC 55618 / DSM 22257 / CCUG 43843 / 130Z).